Here is a 414-residue protein sequence, read N- to C-terminus: uncharacterized protein (414 aa).

The protein belongs to the UbiH/COQ6 family. FAD is required as a cofactor.

This is an uncharacterized protein from Synechocystis sp. (strain ATCC 27184 / PCC 6803 / Kazusa).